We begin with the raw amino-acid sequence, 91 residues long: Soluble cytochrome b558 (91 aa).

Positions 8 to 88 (LPVFTLEQVA…LQRYLIGTLE (81 aa)) constitute a Cytochrome b5 heme-binding domain. The cysteines at positions 25 and 54 are disulfide-linked. His43 and His71 together coordinate heme.

This Ectothiorhodospira shaposhnikovii (Ectothiorhodospira vacuolata) protein is Soluble cytochrome b558.